Reading from the N-terminus, the 859-residue chain is Auxin response factor 2 (859 aa).

The tract at residues 1–48 (MASSEVSMKGNRGGDNFSSSGFSDPKETRNVSVAGEGQKSNSTRSAAA) is disordered. The span at 14-23 (GDNFSSSGFS) shows a compositional bias: low complexity. Residues 164–266 (FCKTLTASDT…ELRVGVRRAM (103 aa)) constitute a DNA-binding region (TF-B3). The span at 396 to 407 (LAPPALSPVPMP) shows a compositional bias: pro residues. Disordered stretches follow at residues 396–442 (LAPP…LPAS), 687–736 (IASP…RSCT), and 829–859 (RSEE…AGNS). Composition is skewed to polar residues over residues 416 to 426 (IAPSSPDSSML) and 695 to 704 (LSDQSKGSKS). The 85-residue stretch at 733–817 (RSCTKVHKQG…RKIFIYTKEE (85 aa)) folds into the PB1 domain. A compositionally biased stretch (polar residues) spans 847–859 (SASNPSLSSAGNS).

It belongs to the ARF family. Homodimers and heterodimers. Interacts with ARF1. In terms of tissue distribution, expressed in the whole plant.

Its subcellular location is the nucleus. Functionally, auxin response factors (ARFs) are transcriptional factors that bind specifically to the DNA sequence 5'-TGTCTC-3' found in the auxin-responsive promoter elements (AuxREs). Could act as transcriptional activator or repressor. Formation of heterodimers with Aux/IAA proteins may alter their ability to modulate early auxin response genes expression. Promotes flowering, stamen development, floral organ abscission and fruit dehiscence. Functions independently of ethylene and cytokinin response pathways. May act as a repressor of cell division and organ growth. The sequence is that of Auxin response factor 2 (ARF2) from Arabidopsis thaliana (Mouse-ear cress).